Consider the following 585-residue polypeptide: Arginine--tRNA ligase (585 aa).

A 'HIGH' region motif is present at residues 131–141; the sequence is ANPTGPMHVGH.

The protein belongs to the class-I aminoacyl-tRNA synthetase family. In terms of assembly, monomer.

It is found in the cytoplasm. The enzyme catalyses tRNA(Arg) + L-arginine + ATP = L-arginyl-tRNA(Arg) + AMP + diphosphate. This Rhizobium leguminosarum bv. trifolii (strain WSM2304) protein is Arginine--tRNA ligase.